A 193-amino-acid chain; its full sequence is Zinc finger CCHC domain-containing protein 17 (193 aa).

One can recognise an S1 motif; truncated domain in the interval 1-40 (MSSCRVDKPSEIVDVGDKVWVKLIGREMKNDRIKVSLSMK). Residue Ser-66 is modified to Phosphoserine. The CCHC-type zinc-finger motif lies at 83–100 (TTCKKCGCKGHFAKDCFM). An N6-acetyllysine modification is found at Lys-96. Positions 113-193 (EEEEKEEAKS…KKKHKKKHKE (81 aa)) are disordered. Residues 118-129 (EEAKSAEFEKPV) are compositionally biased toward basic and acidic residues. Residues 134–150 (PSRKRKKEKKKKKHRDR) are compositionally biased toward basic residues. At Ser-135 the chain carries Phosphoserine. Residues 163 to 177 (DTGKRARHTSKDSKA) are compositionally biased toward basic and acidic residues. The span at 178-193 (AKKKKKKKKHKKKHKE) shows a compositional bias: basic residues.

As to quaternary structure, may interact with PNN. May associate with the 60 S ribosomal subunit.

It localises to the nucleus. Its subcellular location is the nucleolus. The sequence is that of Zinc finger CCHC domain-containing protein 17 (ZCCHC17) from Macaca fascicularis (Crab-eating macaque).